A 602-amino-acid polypeptide reads, in one-letter code: Elongation factor 4 (602 aa).

One can recognise a tr-type G domain in the interval 7 to 189 (SKIRNFCIIA…AIVRRVPPPQ (183 aa)). GTP contacts are provided by residues 19–24 (DHGKST) and 136–139 (NKVD).

It belongs to the TRAFAC class translation factor GTPase superfamily. Classic translation factor GTPase family. LepA subfamily.

It localises to the cell inner membrane. The catalysed reaction is GTP + H2O = GDP + phosphate + H(+). In terms of biological role, required for accurate and efficient protein synthesis under certain stress conditions. May act as a fidelity factor of the translation reaction, by catalyzing a one-codon backward translocation of tRNAs on improperly translocated ribosomes. Back-translocation proceeds from a post-translocation (POST) complex to a pre-translocation (PRE) complex, thus giving elongation factor G a second chance to translocate the tRNAs correctly. Binds to ribosomes in a GTP-dependent manner. This is Elongation factor 4 from Prochlorococcus marinus (strain MIT 9215).